The chain runs to 30 residues: GADVAHKQQSVNHLLYLVTSHYPSLDYSLL.

The protein belongs to the tyrosinase family. Hemocyanin subfamily. In terms of tissue distribution, hemolymph.

It is found in the secreted. The protein localises to the extracellular space. In terms of biological role, hemocyanins are copper-containing oxygen carriers occurring freely dissolved in the hemolymph of many mollusks and arthropods. This Homarus americanus (American lobster) protein is Hemocyanin subunit 2.